The chain runs to 395 residues: D-serine dehydratase (395 aa).

An N6-(pyridoxal phosphate)lysine modification is found at Lys46. The pyridoxal 5'-phosphate site is built by Tyr184, Tyr191, Thr232, Gly254, and Asn255. The Zn(2+) site is built by His365 and Cys367.

Belongs to the DSD1 family. It depends on pyridoxal 5'-phosphate as a cofactor. The cofactor is Zn(2+).

The enzyme catalyses D-serine = pyruvate + NH4(+). Its function is as follows. Catalyzes the conversion of D-serine to pyruvate and ammonia. Plays a role in D-serine detoxification. In Dictyostelium discoideum (Social amoeba), this protein is D-serine dehydratase.